Consider the following 104-residue polypeptide: Large ribosomal subunit protein uL24 (104 aa).

It belongs to the universal ribosomal protein uL24 family. As to quaternary structure, part of the 50S ribosomal subunit.

Its function is as follows. One of two assembly initiator proteins, it binds directly to the 5'-end of the 23S rRNA, where it nucleates assembly of the 50S subunit. One of the proteins that surrounds the polypeptide exit tunnel on the outside of the subunit. This is Large ribosomal subunit protein uL24 from Alteromonas mediterranea (strain DSM 17117 / CIP 110805 / LMG 28347 / Deep ecotype).